Consider the following 159-residue polypeptide: RNA pyrophosphohydrolase (159 aa).

A Nudix hydrolase domain is found at 6-149; sequence GFRPNVGIIL…KREVYRRALK (144 aa). A Nudix box motif is present at residues 38–59; that stretch reads GGINPDETPEDALYRELNEEVG.

The protein belongs to the Nudix hydrolase family. RppH subfamily. A divalent metal cation is required as a cofactor.

In terms of biological role, accelerates the degradation of transcripts by removing pyrophosphate from the 5'-end of triphosphorylated RNA, leading to a more labile monophosphorylated state that can stimulate subsequent ribonuclease cleavage. The chain is RNA pyrophosphohydrolase from Pseudomonas fluorescens (strain SBW25).